Reading from the N-terminus, the 558-residue chain is Glucose-6-phosphate isomerase (558 aa).

Glu362 acts as the Proton donor in catalysis. Catalysis depends on residues His393 and Lys523.

It belongs to the GPI family.

The protein resides in the cytoplasm. The catalysed reaction is alpha-D-glucose 6-phosphate = beta-D-fructose 6-phosphate. Its pathway is carbohydrate degradation; glycolysis; D-glyceraldehyde 3-phosphate and glycerone phosphate from D-glucose: step 2/4. This is Glucose-6-phosphate isomerase (Pgi) from Drosophila simulans (Fruit fly).